The sequence spans 615 residues: DNA mismatch repair protein MutL (615 aa).

Residues 362–397 (HFAEPAVREPVAPRYSPAPASGSRPAASWPNAQPGY) are disordered. Residues 373–391 (APRYSPAPASGSRPAASWP) show a composition bias toward low complexity.

It belongs to the DNA mismatch repair MutL/HexB family.

In terms of biological role, this protein is involved in the repair of mismatches in DNA. It is required for dam-dependent methyl-directed DNA mismatch repair. May act as a 'molecular matchmaker', a protein that promotes the formation of a stable complex between two or more DNA-binding proteins in an ATP-dependent manner without itself being part of a final effector complex. This Escherichia coli O6:H1 (strain CFT073 / ATCC 700928 / UPEC) protein is DNA mismatch repair protein MutL.